The primary structure comprises 259 residues: Putative hydro-lyase Bphyt_4813 (259 aa).

It belongs to the D-glutamate cyclase family.

The sequence is that of Putative hydro-lyase Bphyt_4813 from Paraburkholderia phytofirmans (strain DSM 17436 / LMG 22146 / PsJN) (Burkholderia phytofirmans).